A 147-amino-acid chain; its full sequence is Hemoglobin subunit deltaH (147 aa).

The 145-residue stretch at arginine 3–histidine 147 folds into the Globin domain. Residues histidine 64 and histidine 93 each contribute to the heme b site.

The protein belongs to the globin family. In terms of assembly, heterotetramer of two delta chains and two alpha chains. Red blood cells.

This is Hemoglobin subunit deltaH from Procavia capensis (Rock hyrax).